The sequence spans 552 residues: Formate--tetrahydrofolate ligase (552 aa).

ATP is bound at residue 63 to 70 (TPFGEGKT).

The protein belongs to the formate--tetrahydrofolate ligase family.

The enzyme catalyses (6S)-5,6,7,8-tetrahydrofolate + formate + ATP = (6R)-10-formyltetrahydrofolate + ADP + phosphate. Its pathway is one-carbon metabolism; tetrahydrofolate interconversion. The protein is Formate--tetrahydrofolate ligase of Caldicellulosiruptor bescii (strain ATCC BAA-1888 / DSM 6725 / KCTC 15123 / Z-1320) (Anaerocellum thermophilum).